Consider the following 156-residue polypeptide: ATP synthase subunit b (156 aa).

The chain crosses the membrane as a helical span at residues 7 to 29 (LFGQTIAFAIFVWFCMKFVWPPL).

The protein belongs to the ATPase B chain family. F-type ATPases have 2 components, F(1) - the catalytic core - and F(0) - the membrane proton channel. F(1) has five subunits: alpha(3), beta(3), gamma(1), delta(1), epsilon(1). F(0) has three main subunits: a(1), b(2) and c(10-14). The alpha and beta chains form an alternating ring which encloses part of the gamma chain. F(1) is attached to F(0) by a central stalk formed by the gamma and epsilon chains, while a peripheral stalk is formed by the delta and b chains.

It localises to the cell inner membrane. Functionally, f(1)F(0) ATP synthase produces ATP from ADP in the presence of a proton or sodium gradient. F-type ATPases consist of two structural domains, F(1) containing the extramembraneous catalytic core and F(0) containing the membrane proton channel, linked together by a central stalk and a peripheral stalk. During catalysis, ATP synthesis in the catalytic domain of F(1) is coupled via a rotary mechanism of the central stalk subunits to proton translocation. Component of the F(0) channel, it forms part of the peripheral stalk, linking F(1) to F(0). This Ectopseudomonas mendocina (strain ymp) (Pseudomonas mendocina) protein is ATP synthase subunit b.